We begin with the raw amino-acid sequence, 298 residues long: N-acetylmuramic acid 6-phosphate etherase (298 aa).

Positions 54–217 (CISAIKNHGR…STVTMIKLGK (164 aa)) constitute an SIS domain. The Proton donor role is filled by glutamate 82. Residue glutamate 113 is part of the active site.

The protein belongs to the GCKR-like family. MurNAc-6-P etherase subfamily. As to quaternary structure, homodimer.

It catalyses the reaction N-acetyl-D-muramate 6-phosphate + H2O = N-acetyl-D-glucosamine 6-phosphate + (R)-lactate. It participates in amino-sugar metabolism; N-acetylmuramate degradation. Its function is as follows. Specifically catalyzes the cleavage of the D-lactyl ether substituent of MurNAc 6-phosphate, producing GlcNAc 6-phosphate and D-lactate. The protein is N-acetylmuramic acid 6-phosphate etherase of Petrotoga mobilis (strain DSM 10674 / SJ95).